The primary structure comprises 545 residues: Sulfite oxidase, mitochondrial (545 aa).

A mitochondrion-targeting transit peptide spans 1–79; sequence MLLLHRAVVL…YQDHRCRAAQ (79 aa). Residues 82-161 form the Cytochrome b5 heme-binding domain; it reads THIYTKEEVS…LAQYKIGELN (80 aa). Position 118 (histidine 118) interacts with heme b. The residue at position 123 (serine 123) is a Phosphoserine. 3 residues coordinate heme b: histidine 143, glutamine 145, and histidine 147. The interval 165–174 is hinge; sequence KVAPTVETSD. The moco domain stretch occupies residues 175–401; it reads PYADDPVRHP…YSHWQRRDYK (227 aa). Mo-molybdopterin contacts are provided by residues 215 to 219, cysteine 264, aspartate 322, histidine 361, arginine 366, and 377 to 379; these read FTRNH and HVK. The tract at residues 402–538 is homodimerization; it reads GFSPSVDWET…RGVLSNAWHR (137 aa).

As to quaternary structure, homodimer. It depends on heme b as a cofactor. Requires Mo-molybdopterin as cofactor.

The protein localises to the mitochondrion intermembrane space. The enzyme catalyses sulfite + O2 + H2O = sulfate + H2O2. The protein operates within energy metabolism; sulfur metabolism. Its function is as follows. Catalyzes the oxidation of sulfite to sulfate, the terminal reaction in the oxidative degradation of sulfur-containing amino acids. This chain is Sulfite oxidase, mitochondrial (SUOX), found in Homo sapiens (Human).